Reading from the N-terminus, the 85-residue chain is NAD(P)H-quinone oxidoreductase subunit O (85 aa).

It belongs to the complex I NdhO subunit family. NDH-1 can be composed of about 15 different subunits; different subcomplexes with different compositions have been identified which probably have different functions.

Its subcellular location is the cellular thylakoid membrane. It carries out the reaction a plastoquinone + NADH + (n+1) H(+)(in) = a plastoquinol + NAD(+) + n H(+)(out). It catalyses the reaction a plastoquinone + NADPH + (n+1) H(+)(in) = a plastoquinol + NADP(+) + n H(+)(out). NDH-1 shuttles electrons from an unknown electron donor, via FMN and iron-sulfur (Fe-S) centers, to quinones in the respiratory and/or the photosynthetic chain. The immediate electron acceptor for the enzyme in this species is believed to be plastoquinone. Couples the redox reaction to proton translocation, and thus conserves the redox energy in a proton gradient. Cyanobacterial NDH-1 also plays a role in inorganic carbon-concentration. This is NAD(P)H-quinone oxidoreductase subunit O from Synechococcus sp. (strain CC9311).